A 424-amino-acid chain; its full sequence is Serpin E3 (424 aa).

A signal peptide spans 1 to 20; it reads MPPFLITLFLFHSCCLRANG. Residue Asn-46 is glycosylated (N-linked (GlcNAc...) asparagine). The disordered stretch occupies residues 143-174; sequence DLSEPNSTAIQTSEGASRETAGGGPSEGPGGW. Over residues 146 to 157 the composition is skewed to polar residues; the sequence is EPNSTAIQTSEG. The segment covering 163 to 173 has biased composition (gly residues); the sequence is AGGGPSEGPGG.

Belongs to the serpin family.

It localises to the secreted. In terms of biological role, probable serine protease inhibitor. The sequence is that of Serpin E3 (SERPINE3) from Homo sapiens (Human).